Reading from the N-terminus, the 532-residue chain is FAD-dependent monooxygenase hkm7 (532 aa).

FAD-binding positions include 191 to 193 and D261; that span reads RIY.

The protein belongs to the PheA/TfdB FAD monooxygenase family.

It functions in the pathway secondary metabolite biosynthesis. FAD-dependent monooxygenase; part of the gene cluster that mediates the biosynthesis of hancockiamides, an unusual new family of N-cinnamoylated piperazines. The NRPS hkm10 and the NmrA-like reductase hkm9 are proposed to convert two molecules of L-Phe to the intermediary piperazine called xenocockiamide A. Xenocockiamide A is then converted to hancockiamide D via a series of hydroxylations and O-methylations. The tyrosinase hkm6 may catalyze an aromatic hydroxylation, then the 2-oxoglutarate-dependent Fe(II) dioxygenase hkm4 and the FAD-dependent phenol hydroxylase hkm7 may catalyze consecutive hydroxylations to install 2 more hydroxy groups, and the methyltransferase hkm8 probably catalyzes two methylations using 2 molecules of S-adenosyl-L-methionine (SAM). The NRPS hkm11 activates and transfers trans-cinnamate supplied by the PAL hkm12 to hancockiamide D and produces hancockiamide A. NRPS Hkm11 has the flexibility to tolerate the bulky hancockiamide G as a substrate and the absence of the acetyl-transferase hkm3 opens up the opportunity for hkm11 to introduce a second N-cinnamoyl moiety. The cytochrome P450 monooxygenase hkm5 catalyzes the methylenedioxy bridge formation, converting hancockiamide A into hancockiamide G. Hkm5 can also convert hancockiamide B into hancockiamide C, and hancockiamide D into hancockiamide H. The N-acetyltransferase hkm3 finally transfers an acetyl group to 1-N of piperazine, converting hancockiamide A into hancockiamide B and hancockiamide G into hancockiamide C. In Aspergillus hancockii, this protein is FAD-dependent monooxygenase hkm7.